A 445-amino-acid chain; its full sequence is Enolase 1 (445 aa).

Residues H164 and E173 each contribute to the substrate site. E216 serves as the catalytic Proton donor. 3 residues coordinate Mg(2+): D251, E301, and D328. The substrate site is built by E301 and D328. K353 (proton acceptor) is an active-site residue. Residues 380 to 383 and K404 each bind substrate; that span reads SHRS.

Belongs to the enolase family. Homodimer. Mg(2+) is required as a cofactor.

It localises to the cytoplasm. The catalysed reaction is (2R)-2-phosphoglycerate = phosphoenolpyruvate + H2O. It participates in carbohydrate degradation; glycolysis; pyruvate from D-glyceraldehyde 3-phosphate: step 4/5. In Hevea brasiliensis (Para rubber tree), this protein is Enolase 1 (ENO1).